We begin with the raw amino-acid sequence, 293 residues long: Fructose-bisphosphate aldolase (293 aa).

Ser-50 contributes to the D-glyceraldehyde 3-phosphate binding site. Asp-85 (proton donor) is an active-site residue. Zn(2+) is bound by residues His-86, Asp-106, Glu-136, and His-178. Gly-179 is a dihydroxyacetone phosphate binding site. His-208 serves as a coordination point for Zn(2+). Residues 209-211 (GGS) and 230-233 (NVNT) contribute to the dihydroxyacetone phosphate site.

The protein belongs to the class II fructose-bisphosphate aldolase family. The cofactor is Zn(2+).

The enzyme catalyses beta-D-fructose 1,6-bisphosphate = D-glyceraldehyde 3-phosphate + dihydroxyacetone phosphate. It functions in the pathway carbohydrate degradation; glycolysis; D-glyceraldehyde 3-phosphate and glycerone phosphate from D-glucose: step 4/4. Catalyzes the aldol condensation of dihydroxyacetone phosphate (DHAP or glycerone-phosphate) with glyceraldehyde 3-phosphate (G3P) to form fructose 1,6-bisphosphate (FBP) in gluconeogenesis and the reverse reaction in glycolysis. This Streptococcus pyogenes serotype M6 (strain ATCC BAA-946 / MGAS10394) protein is Fructose-bisphosphate aldolase (fba).